The chain runs to 273 residues: R-spondin-3 (273 aa).

The first 21 residues, 1–21, serve as a signal peptide directing secretion; it reads MHLRLISWFFIILNFMEYIGS. 2 FU repeats span residues 35-86 and 92-135; these read PNVS…GYYG and INKC…GLEA. N36 carries N-linked (GlcNAc...) asparagine glycosylation. Cystine bridges form between C41-C48, C45-C54, C57-C76, C80-C95, C98-C105, C102-C111, C114-C125, C129-C142, C148-C190, C159-C166, and C199-C206. The 61-residue stretch at 147 to 207 folds into the TSP type-1 domain; it reads HCEASEWSPW…KCTVQRKKCP (61 aa). Residues 201-273 are disordered; the sequence is VQRKKCPKGE…QKSVSVSTVH (73 aa). A compositionally biased stretch (basic residues) spans 213 to 223; sequence RKGRERKRKKP. Over residues 224–252 the composition is skewed to basic and acidic residues; the sequence is NKEESKDAIPDNKGLEPSRETPEQRENKQ.

Belongs to the R-spondin family. In terms of assembly, interacts with the extracellular domain of FZD8 and LRP6. It however does not form a ternary complex with FZD8 and LRP6. Interacts with WNT1. Binds heparin. Interacts with LGR4, LGR5 and LGR6.

The protein localises to the secreted. Functionally, activator of the canonical Wnt signaling pathway by acting as a ligand for LGR4-6 receptors, which acts as a key regulator of angiogenesis. Upon binding to LGR4-6 (LGR4, LGR5 or LGR6), LGR4-6 associate with phosphorylated LRP6 and frizzled receptors that are activated by extracellular Wnt receptors, triggering the canonical Wnt signaling pathway to increase expression of target genes. Also regulates the canonical Wnt/beta-catenin-dependent pathway and non-canonical Wnt signaling by acting as an inhibitor of ZNRF3, an important regulator of the Wnt signaling pathway. Acts as a ligand for frizzled FZD8 and LRP6. May negatively regulate the TGF-beta pathway. Acts as a key regulator of angiogenesis by controlling vascular stability and pruning: acts by activating the non-canonical Wnt signaling pathway in endothelial cells. Can also amplify Wnt signaling pathway independently of LGR4-6 receptors, possibly by acting as a direct antagonistic ligand to RNF43 and ZNRF3. The chain is R-spondin-3 (RSPO3) from Bos taurus (Bovine).